The following is a 230-amino-acid chain: MEIKVLEKGFIRLVEVMGDDFSAVQAARVSYGKGLTTPERDKKLIFYLMEHGHHSPFEHIIFKFHIKLPIFVMRQLVRHRIASINERSGRYTEFSDEWYIPERIRTPDKVNRQGSVFVDDDDLNSEGIRLIEETIEKTYQAYKRLLEMGVARELARIVLPTSMYTECYWTINARSMMNFLNLRADSHAQYEMQQYALAVAKIFKSKCPVTYEAFLNFAYTGDLLKTEGCL.

A ThyX domain is found at 1–217 (MEIKVLEKGF…PVTYEAFLNF (217 aa)). Residues serine 55, 78-80 (RHR), and glutamate 86 contribute to the FAD site. Residues 75-78 (QLVR), 86-90 (ERSGR), and arginine 156 contribute to the dUMP site. The ThyX motif motif lies at 78 to 88 (RHRIASINERS). Residues 172–174 (NAR) and asparagine 178 each bind FAD. Arginine 183 contributes to the dUMP binding site. Arginine 183 (involved in ionization of N3 of dUMP, leading to its activation) is an active-site residue.

The protein belongs to the thymidylate synthase ThyX family. Homotetramer. It depends on FAD as a cofactor.

The catalysed reaction is dUMP + (6R)-5,10-methylene-5,6,7,8-tetrahydrofolate + NADPH + H(+) = dTMP + (6S)-5,6,7,8-tetrahydrofolate + NADP(+). Its pathway is pyrimidine metabolism; dTTP biosynthesis. Catalyzes the reductive methylation of 2'-deoxyuridine-5'-monophosphate (dUMP) to 2'-deoxythymidine-5'-monophosphate (dTMP) while utilizing 5,10-methylenetetrahydrofolate (mTHF) as the methyl donor, and NADPH and FADH(2) as the reductant. In Kosmotoga olearia (strain ATCC BAA-1733 / DSM 21960 / TBF 19.5.1), this protein is Flavin-dependent thymidylate synthase.